Consider the following 163-residue polypeptide: uncharacterized protein (163 aa).

Residues Thr7–Ile23 form a helical membrane-spanning segment.

The protein localises to the membrane. This is an uncharacterized protein from Saccharomyces cerevisiae (strain ATCC 204508 / S288c) (Baker's yeast).